We begin with the raw amino-acid sequence, 96 residues long: Co-chaperonin GroES (96 aa).

Belongs to the GroES chaperonin family. Heptamer of 7 subunits arranged in a ring. Interacts with the chaperonin GroEL.

Its subcellular location is the cytoplasm. In terms of biological role, together with the chaperonin GroEL, plays an essential role in assisting protein folding. The GroEL-GroES system forms a nano-cage that allows encapsulation of the non-native substrate proteins and provides a physical environment optimized to promote and accelerate protein folding. GroES binds to the apical surface of the GroEL ring, thereby capping the opening of the GroEL channel. The polypeptide is Co-chaperonin GroES (Legionella pneumophila (strain Paris)).